Here is a 549-residue protein sequence, read N- to C-terminus: Cation/acetate symporter ActP (549 aa).

The next 13 helical transmembrane spans lie at 33 to 53 (WQAI…TYWA), 77 to 97 (LAIA…ALVF), 103 to 123 (GLIY…LIAE), 148 to 168 (ILSA…QMVG), 183 to 203 (IAVV…GMLA), 206 to 226 (WVQI…AFMV), 262 to 282 (ISAL…PHIL), 303 to 323 (GFMG…IMLV), 355 to 375 (LFLG…VAGL), 404 to 424 (VSKI…VLFE), 428 to 448 (IAFM…PIIL), 464 to 484 (GGWL…TIWV), and 493 to 513 (IFPY…GIWF).

The protein belongs to the sodium:solute symporter (SSF) (TC 2.A.21) family.

The protein localises to the cell inner membrane. Functionally, transports acetate. The protein is Cation/acetate symporter ActP of Salmonella agona (strain SL483).